Reading from the N-terminus, the 338-residue chain is Glycerol-3-phosphate dehydrogenase [NAD(P)+] (338 aa).

Ser11, Trp12, His32, Arg33, and Lys106 together coordinate NADPH. 3 residues coordinate sn-glycerol 3-phosphate: Lys106, Gly137, and Ser139. Ala141 serves as a coordination point for NADPH. Sn-glycerol 3-phosphate-binding residues include Lys192, Asp245, Ser255, Arg256, and Asn257. The active-site Proton acceptor is Lys192. Position 256 (Arg256) interacts with NADPH. NADPH-binding residues include Val280 and Glu282.

This sequence belongs to the NAD-dependent glycerol-3-phosphate dehydrogenase family.

Its subcellular location is the cytoplasm. It catalyses the reaction sn-glycerol 3-phosphate + NAD(+) = dihydroxyacetone phosphate + NADH + H(+). It carries out the reaction sn-glycerol 3-phosphate + NADP(+) = dihydroxyacetone phosphate + NADPH + H(+). It functions in the pathway membrane lipid metabolism; glycerophospholipid metabolism. In terms of biological role, catalyzes the reduction of the glycolytic intermediate dihydroxyacetone phosphate (DHAP) to sn-glycerol 3-phosphate (G3P), the key precursor for phospholipid synthesis. In Lysinibacillus sphaericus (strain C3-41), this protein is Glycerol-3-phosphate dehydrogenase [NAD(P)+].